The chain runs to 690 residues: Eukaryotic translation initiation factor 3 subunit B (690 aa).

Residues Met1–Ser11 are compositionally biased toward basic and acidic residues. Residues Met1–Asp33 are disordered. The span at Asn15–Phe25 shows a compositional bias: acidic residues. One can recognise an RRM domain in the interval Ser57–Asp141. WD repeat units lie at residues Thr207–Lys246, Asp293–Leu331, Ile334–Glu369, Glu442–Leu484, and Pro530–Thr575. Positions Gln614–Arg645 form a coiled coil.

Belongs to the eIF-3 subunit B family. In terms of assembly, component of the eukaryotic translation initiation factor 3 (eIF-3) complex. The eIF-3 complex interacts with pix. Interacts with mxt.

The protein resides in the cytoplasm. Its function is as follows. RNA-binding component of the eukaryotic translation initiation factor 3 (eIF-3) complex, which is involved in protein synthesis of a specialized repertoire of mRNAs and, together with other initiation factors, stimulates binding of mRNA and methionyl-tRNAi to the 40S ribosome. The eIF-3 complex specifically targets and initiates translation of a subset of mRNAs involved in cell proliferation. The chain is Eukaryotic translation initiation factor 3 subunit B from Drosophila willistoni (Fruit fly).